The primary structure comprises 163 residues: 3-hydroxyacyl-[acyl-carrier-protein] dehydratase FabZ (163 aa).

The active site involves H64.

Belongs to the thioester dehydratase family. FabZ subfamily.

The protein resides in the cytoplasm. It carries out the reaction a (3R)-hydroxyacyl-[ACP] = a (2E)-enoyl-[ACP] + H2O. Functionally, involved in unsaturated fatty acids biosynthesis. Catalyzes the dehydration of short chain beta-hydroxyacyl-ACPs and long chain saturated and unsaturated beta-hydroxyacyl-ACPs. This chain is 3-hydroxyacyl-[acyl-carrier-protein] dehydratase FabZ, found in Caulobacter sp. (strain K31).